A 263-amino-acid polypeptide reads, in one-letter code: uncharacterized protein (263 aa).

Residue 31–38 (GPTGSGKT) coordinates ATP.

Belongs to the CbbQ/NirQ/NorQ/GpvN family.

This is an uncharacterized protein from Staphylococcus epidermidis (strain ATCC 12228 / FDA PCI 1200).